The sequence spans 97 residues: UPF0223 protein lp_2149 (97 aa).

Belongs to the UPF0223 family.

The chain is UPF0223 protein lp_2149 from Lactiplantibacillus plantarum (strain ATCC BAA-793 / NCIMB 8826 / WCFS1) (Lactobacillus plantarum).